The chain runs to 322 residues: GATA transcription factor 8 (322 aa).

The interval 93-168 (TLVEKKEDSF…DKDRVKDNVC (76 aa)) is disordered. Low complexity predominate over residues 102 to 141 (FSTNTDSSSSHSQFRSSSPVSVLESSSSSSQTTNTTSLVL). Residues 144–154 (KHGRPRTKRPR) are compositionally biased toward basic residues. The Nuclear localization signal motif lies at 147–154 (RPRTKRPR). A GATA-type zinc finger spans residues 225–279 (QYPLRKCMHCEVTKTPQWRLGPMGPKTLCNACGVRYKSGRLFPEYRPAASPTFTP).

This sequence belongs to the type IV zinc-finger family. Class A subfamily.

It localises to the nucleus. Functionally, transcriptional activator that specifically binds 5'-GATA-3' or 5'-GAT-3' motifs within gene promoters. May be involved in the regulation of some light-responsive genes. This Arabidopsis thaliana (Mouse-ear cress) protein is GATA transcription factor 8 (GATA8).